The sequence spans 60 residues: Large ribosomal subunit protein bL32 (60 aa).

A disordered region spans residues 1 to 60; it reads MAVQQNKKSPSKRGMHRSHNALTVPGIAVEPTTGETHLRHHISPNGFYRGRQVLKNKSEA. The segment covering 9–19 has biased composition (basic residues); that stretch reads SPSKRGMHRSH.

This sequence belongs to the bacterial ribosomal protein bL32 family.

The sequence is that of Large ribosomal subunit protein bL32 from Paracidovorax citrulli (strain AAC00-1) (Acidovorax citrulli).